We begin with the raw amino-acid sequence, 230 residues long: Cysteine S-methyltransferase OspZ (230 aa).

The segment at 49-52 is interaction with host proteins TAB2, TAB3 and ZRANB3; that stretch reads GITR. The S-adenosyl-L-methionine site is built by A92, S98, R107, Q111, Y204, and E208.

The protein belongs to the NleE/OspZ family. As to quaternary structure, monomer.

It localises to the secreted. The protein resides in the host cytoplasm. Its subcellular location is the host nucleus. The enzyme catalyses L-cysteinyl-[protein] + S-adenosyl-L-methionine = S-methyl-L-cysteinyl-[protein] + S-adenosyl-L-homocysteine + H(+). Cysteine methyltransferase effector that inhibits host cell NF-kappa-B activation by preventing nuclear translocation of host protein RELA/p65. Acts by mediating cysteine methylation of host proteins TAB2 and TAB3: methylation of a conserved cysteine residue of the RanBP2-type zinc finger (NZF) of TAB2 and TAB3 disrupts zinc-binding, thereby inactivating the ubiquitin chain-binding activity of TAB2 and TAB3, leading to NF-kappa-B inactivation. Also mediates cysteine methylation of host protein ZRANB3, inactivating its ability to bind ubiquitin chains. This chain is Cysteine S-methyltransferase OspZ, found in Shigella flexneri.